A 313-amino-acid polypeptide reads, in one-letter code: 4-hydroxy-3-methylbut-2-enyl diphosphate reductase (313 aa).

Cysteine 12 lines the [4Fe-4S] cluster pocket. Residues histidine 41 and histidine 74 each contribute to the (2E)-4-hydroxy-3-methylbut-2-enyl diphosphate site. The dimethylallyl diphosphate site is built by histidine 41 and histidine 74. Positions 41 and 74 each coordinate isopentenyl diphosphate. Cysteine 96 contributes to the [4Fe-4S] cluster binding site. Histidine 124 lines the (2E)-4-hydroxy-3-methylbut-2-enyl diphosphate pocket. A dimethylallyl diphosphate-binding site is contributed by histidine 124. Histidine 124 serves as a coordination point for isopentenyl diphosphate. Glutamate 126 acts as the Proton donor in catalysis. Residue threonine 164 participates in (2E)-4-hydroxy-3-methylbut-2-enyl diphosphate binding. [4Fe-4S] cluster is bound at residue cysteine 194. Positions 222, 223, 224, and 266 each coordinate (2E)-4-hydroxy-3-methylbut-2-enyl diphosphate. Dimethylallyl diphosphate contacts are provided by serine 222, serine 223, asparagine 224, and serine 266. The isopentenyl diphosphate site is built by serine 222, serine 223, asparagine 224, and serine 266.

It belongs to the IspH family. [4Fe-4S] cluster is required as a cofactor.

The catalysed reaction is isopentenyl diphosphate + 2 oxidized [2Fe-2S]-[ferredoxin] + H2O = (2E)-4-hydroxy-3-methylbut-2-enyl diphosphate + 2 reduced [2Fe-2S]-[ferredoxin] + 2 H(+). It catalyses the reaction dimethylallyl diphosphate + 2 oxidized [2Fe-2S]-[ferredoxin] + H2O = (2E)-4-hydroxy-3-methylbut-2-enyl diphosphate + 2 reduced [2Fe-2S]-[ferredoxin] + 2 H(+). It functions in the pathway isoprenoid biosynthesis; dimethylallyl diphosphate biosynthesis; dimethylallyl diphosphate from (2E)-4-hydroxy-3-methylbutenyl diphosphate: step 1/1. The protein operates within isoprenoid biosynthesis; isopentenyl diphosphate biosynthesis via DXP pathway; isopentenyl diphosphate from 1-deoxy-D-xylulose 5-phosphate: step 6/6. Catalyzes the conversion of 1-hydroxy-2-methyl-2-(E)-butenyl 4-diphosphate (HMBPP) into a mixture of isopentenyl diphosphate (IPP) and dimethylallyl diphosphate (DMAPP). Acts in the terminal step of the DOXP/MEP pathway for isoprenoid precursor biosynthesis. This chain is 4-hydroxy-3-methylbut-2-enyl diphosphate reductase, found in Protochlamydia amoebophila (strain UWE25).